The primary structure comprises 402 residues: GTPase Obg (402 aa).

The 159-residue stretch at methionine 1–valine 159 folds into the Obg domain. Residues alanine 160–glutamate 334 enclose the OBG-type G domain. GTP-binding positions include glycine 166–serine 173, phenylalanine 191–valine 195, aspartate 213–glycine 216, asparagine 283–aspartate 286, and serine 315–leucine 317. Mg(2+)-binding residues include serine 173 and threonine 193. The disordered stretch occupies residues alanine 382–proline 402. Residues glutamate 387–valine 396 show a composition bias toward acidic residues.

This sequence belongs to the TRAFAC class OBG-HflX-like GTPase superfamily. OBG GTPase family. In terms of assembly, monomer. The cofactor is Mg(2+).

The protein resides in the cytoplasm. Its function is as follows. An essential GTPase which binds GTP, GDP and possibly (p)ppGpp with moderate affinity, with high nucleotide exchange rates and a fairly low GTP hydrolysis rate. Plays a role in control of the cell cycle, stress response, ribosome biogenesis and in those bacteria that undergo differentiation, in morphogenesis control. The polypeptide is GTPase Obg (Psychrobacter sp. (strain PRwf-1)).